The chain runs to 201 residues: Peptide deformylase 2 (201 aa).

Cys121 and His163 together coordinate Fe cation. Glu164 is a catalytic residue. His167 is a binding site for Fe cation.

It belongs to the polypeptide deformylase family. Fe(2+) serves as cofactor.

The catalysed reaction is N-terminal N-formyl-L-methionyl-[peptide] + H2O = N-terminal L-methionyl-[peptide] + formate. Removes the formyl group from the N-terminal Met of newly synthesized proteins. Requires at least a dipeptide for an efficient rate of reaction. N-terminal L-methionine is a prerequisite for activity but the enzyme has broad specificity at other positions. This is Peptide deformylase 2 from Prochlorococcus marinus (strain MIT 9313).